The sequence spans 103 residues: Large ribosomal subunit protein bL21 (103 aa).

It belongs to the bacterial ribosomal protein bL21 family. Part of the 50S ribosomal subunit. Contacts protein L20.

In terms of biological role, this protein binds to 23S rRNA in the presence of protein L20. In Rhodococcus jostii (strain RHA1), this protein is Large ribosomal subunit protein bL21.